The primary structure comprises 812 residues: Eukaryotic translation initiation factor 3 subunit C (812 aa).

Residues 1–105 (MSRFFSRGYH…SDESDDEGKK (105 aa)) are disordered. Acidic residues-rich tracts occupy residues 17–40 (SEDE…EVVS) and 48–59 (SESESAESDDDS). One can recognise a PCI domain in the interval 607–783 (FHQHINLDLI…EMLIFDKGDE (177 aa)).

This sequence belongs to the eIF-3 subunit C family. As to quaternary structure, component of the eukaryotic translation initiation factor 3 (eIF-3) complex.

It is found in the cytoplasm. Component of the eukaryotic translation initiation factor 3 (eIF-3) complex, which is involved in protein synthesis of a specialized repertoire of mRNAs and, together with other initiation factors, stimulates binding of mRNA and methionyl-tRNAi to the 40S ribosome. The eIF-3 complex specifically targets and initiates translation of a subset of mRNAs involved in cell proliferation. The chain is Eukaryotic translation initiation factor 3 subunit C from Eremothecium gossypii (strain ATCC 10895 / CBS 109.51 / FGSC 9923 / NRRL Y-1056) (Yeast).